The sequence spans 677 residues: DNA-directed RNA polymerase subunit beta' (677 aa).

Positions 69, 71, 87, and 90 each coordinate Zn(2+). Residues aspartate 489, aspartate 491, and aspartate 493 each contribute to the Mg(2+) site.

The protein belongs to the RNA polymerase beta' chain family. RpoC1 subfamily. In terms of assembly, in plastids the minimal PEP RNA polymerase catalytic core is composed of four subunits: alpha, beta, beta', and beta''. When a (nuclear-encoded) sigma factor is associated with the core the holoenzyme is formed, which can initiate transcription. Mg(2+) serves as cofactor. Requires Zn(2+) as cofactor.

The protein localises to the plastid. Its subcellular location is the chloroplast. The catalysed reaction is RNA(n) + a ribonucleoside 5'-triphosphate = RNA(n+1) + diphosphate. Its function is as follows. DNA-dependent RNA polymerase catalyzes the transcription of DNA into RNA using the four ribonucleoside triphosphates as substrates. This is DNA-directed RNA polymerase subunit beta' from Spinacia oleracea (Spinach).